A 775-amino-acid polypeptide reads, in one-letter code: Hepatocyte growth factor-regulated tyrosine kinase substrate (775 aa).

Residues 15-143 form the VHS domain; it reads ATSQLLLETD…IMKVEGHVFP (129 aa). Residues 160–220 form an FYVE-type zinc finger; sequence WVDAEECHRC…VCEPCYEQLN (61 aa). Residues C166, C169, C182, C185, C190, and C193 each contribute to the Zn(2+) site. N6-acetyllysine is present on K207. Zn(2+) is bound by residues C212 and C215. Position 216 is a phosphotyrosine (Y216). Residues 223–319 form a disordered region; it reads AEGKASSTTE…SPVNSSAPLA (97 aa). Residues 225–541 form an interaction with SNX1 region; that stretch reads GKASSTTELP…QRLQEQEKER (317 aa). A UIM domain is found at 258-277; the sequence is QEEEELQLALALSQSEAEEK. Polar residues predominate over residues 307 to 316; the sequence is LYSSPVNSSA. Residues Y308, Y329, and Y334 each carry the phosphotyrosine modification. The segment at 338-405 is disordered; the sequence is KQEEARKSPT…NGESEESHEQ (68 aa). Residues 443–541 are interaction with SNAP25 and TRAK2; the sequence is SINTMHPQLL…QRLQEQEKER (99 aa). The segment at 452 to 570 is interaction with STAM; that stretch reads LELLNQLDER…FPLPYAQLQA (119 aa). Positions 478 to 775 are interaction with NF2; it reads ARGALSALRE…GSEAQLISFD (298 aa). An N6-succinyllysine modification is found at K549. The segment covering 640 to 657 has biased composition (low complexity); the sequence is PGAQAAPQAQAGPTTSPA. 2 disordered regions span residues 640–690 and 719–775; these read PGAQ…PQTS and QDAS…ISFD. Residues 658–690 show a composition bias toward polar residues; it reads YSSYQPTPTPGYQSVASQAPQSLPAISQPPQTS. Positions 744–761 are enriched in pro residues; it reads TGPPQQQPPVAQPAPTQG.

As to quaternary structure, component of the ESCRT-0 complex composed of STAM or STAM2 and HGS. Part of a complex at least composed of HSG, STAM2 (or probably STAM) and EPS15. Interacts with STAM. Interacts with STAM2. Interacts with EPS15; the interaction is direct, calcium-dependent and inhibited by SNAP25. Identified in a complex with STAM and LITAF. Found in a complex with STAM and E3 ligase ITCH and DTX3L. Interacts with E3 ligase DTX3L; the interaction brings together STAM and HSG, promotes their recruitment to early endosomes and decreases STAM and HGS ubiquitination by ITCH. Interacts with NF2; the interaction is direct. Interacts with ubiquitin; the interaction is direct. Interacts with VPS37C. Interacts with SMAD1, SMAD2 and SMAD3. Interacts with TSG101; the interaction mediates the association with the ESCRT-I complex. Interacts with SNAP25; the interaction is direct and decreases with addition of increasing concentrations of free calcium. Interacts with SNX1; the interaction is direct. Component of a 550 kDa membrane complex at least composed of HGS and SNX1 but excluding EGFR. Interacts with TRAK1. Interacts with TRAK2. Component of the CART complex, at least composed of ACTN4, HGS/HRS, MYO5B and TRIM3. Interacts with ARRDC3. Identified in a complex containing at least ARRDC4, AVPR2 and HGS. Interacts (via UIM domain) with UBQLN1 (via ubiquitin-like domain). Interacts with LAPTM4B; promotes HGS ubiquitination. Phosphorylated on Tyr-334. This phosphorylation occurs in response to EGF. A minor site of phosphorylation on Tyr-329 is detected. Protein phosphorylation may also be triggered in response to IL-2, GM-CSF and HGF. In terms of processing, ubiquitinated by ITCH. In terms of tissue distribution, ubiquitous expression in adult and fetal tissues with higher expression in testis.

It is found in the cytoplasm. It localises to the early endosome membrane. Its subcellular location is the endosome. The protein resides in the multivesicular body membrane. In terms of biological role, involved in intracellular signal transduction mediated by cytokines and growth factors. When associated with STAM, it suppresses DNA signaling upon stimulation by IL-2 and GM-CSF. Could be a direct effector of PI3-kinase in vesicular pathway via early endosomes and may regulate trafficking to early and late endosomes by recruiting clathrin. May concentrate ubiquitinated receptors within clathrin-coated regions. Involved in down-regulation of receptor tyrosine kinase via multivesicular body (MVBs) when complexed with STAM (ESCRT-0 complex). The ESCRT-0 complex binds ubiquitin and acts as a sorting machinery that recognizes ubiquitinated receptors and transfers them to further sequential lysosomal sorting/trafficking processes. May contribute to the efficient recruitment of SMADs to the activin receptor complex. Involved in receptor recycling via its association with the CART complex, a multiprotein complex required for efficient transferrin receptor recycling but not for EGFR degradation. The protein is Hepatocyte growth factor-regulated tyrosine kinase substrate (Hgs) of Mus musculus (Mouse).